Here is a 158-residue protein sequence, read N- to C-terminus: MRFKNRLFWIAAFIAFFVDQLTKYWVVQTFSLGETLPILPGIFHFTYVTNTGAAFSLFSGKVEWLRWLSLGVSLLLIGLALLGPVLDRWDQLGYGLILGGAMGNGIDRFALGYVVDFLDFRLINFAVFNMADSFISIGIVCLLLASLQKPPSSHHRPR.

A run of 4 helical transmembrane segments spans residues 7-27, 38-58, 67-87, and 95-115; these read LFWIAAFIAFFVDQLTKYWVV, ILPGIFHFTYVTNTGAAFSLF, WLSLGVSLLLIGLALLGPVLD, and GLILGGAMGNGIDRFALGYVV. Active-site residues include D116 and D132. Residues 125 to 145 traverse the membrane as a helical segment; that stretch reads FAVFNMADSFISIGIVCLLLA.

The protein belongs to the peptidase A8 family.

It is found in the cell inner membrane. The catalysed reaction is Release of signal peptides from bacterial membrane prolipoproteins. Hydrolyzes -Xaa-Yaa-Zaa-|-(S,diacylglyceryl)Cys-, in which Xaa is hydrophobic (preferably Leu), and Yaa (Ala or Ser) and Zaa (Gly or Ala) have small, neutral side chains.. It participates in protein modification; lipoprotein biosynthesis (signal peptide cleavage). This protein specifically catalyzes the removal of signal peptides from prolipoproteins. This chain is Lipoprotein signal peptidase, found in Nostoc sp. (strain PCC 7120 / SAG 25.82 / UTEX 2576).